The following is a 248-amino-acid chain: 5'-nucleotidase SurE (248 aa).

Residues aspartate 8, aspartate 9, serine 39, and asparagine 92 each contribute to the a divalent metal cation site.

It belongs to the SurE nucleotidase family. Requires a divalent metal cation as cofactor.

It is found in the cytoplasm. The enzyme catalyses a ribonucleoside 5'-phosphate + H2O = a ribonucleoside + phosphate. Its function is as follows. Nucleotidase that shows phosphatase activity on nucleoside 5'-monophosphates. The chain is 5'-nucleotidase SurE from Tolumonas auensis (strain DSM 9187 / NBRC 110442 / TA 4).